The sequence spans 173 residues: Trafficking regulator of GLUT4 1 (173 aa).

Residues Met-1–Pro-17 show a composition bias toward polar residues. The tract at residues Met-1–Glu-22 is disordered. Over Met-1–Leu-102 the chain is Cytoplasmic. Phosphoserine is present on residues Ser-16, Ser-43, Ser-45, Ser-70, Ser-84, and Ser-85. The helical intramembrane region spans Val-103–Phe-123. Over Ser-124–Ser-150 the chain is Cytoplasmic. The chain crosses the membrane as a helical span at residues Ile-151–Val-171. Over Pro-172 to Lys-173 the chain is Extracellular.

Belongs to the CD225/Dispanin family. As to quaternary structure, interacts with SLC2A4; the interaction is required for proper SLC2A4 reacycling after insulin stimulation. Present in adipose tissue and undetectable in other tissues (at protein level).

The protein localises to the cell membrane. It is found in the endomembrane system. The protein resides in the cytoplasm. It localises to the perinuclear region. Functionally, regulates insulin-mediated adipose tissue glucose uptake and transport by modulation of SLC2A4 recycling. Not required for SLC2A4 membrane fusion upon an initial stimulus, but rather is necessary for proper protein recycling during prolonged insulin stimulation. The polypeptide is Trafficking regulator of GLUT4 1 (Rattus norvegicus (Rat)).